A 400-amino-acid polypeptide reads, in one-letter code: Subtilisin-like protease 7 (400 aa).

Positions 1–20 (MGFITKAIPLALAAMSVVNG) are cleaved as a signal peptide. Residues 21–119 (AEILETRAGV…IERDARVQIN (99 aa)) constitute a propeptide that is removed on maturation. In terms of domain architecture, Inhibitor I9 spans 36 to 118 (KYIVIMNDGV…YIERDARVQI (83 aa)). The Peptidase S8 domain maps to 129–400 (SWGLARVGSR…GKLINNGSGK (272 aa)). Catalysis depends on charge relay system residues aspartate 161 and histidine 192. Residues asparagine 222 and asparagine 252 are each glycosylated (N-linked (GlcNAc...) asparagine). Serine 346 functions as the Charge relay system in the catalytic mechanism. Residue asparagine 396 is glycosylated (N-linked (GlcNAc...) asparagine).

This sequence belongs to the peptidase S8 family.

The protein localises to the secreted. In terms of biological role, secreted subtilisin-like serine protease with keratinolytic activity that contributes to pathogenicity. This chain is Subtilisin-like protease 7 (SUB7), found in Arthroderma otae (strain ATCC MYA-4605 / CBS 113480) (Microsporum canis).